The chain runs to 1009 residues: Helicase-like transcription factor (1009 aa).

Residue arginine 27 is modified to Omega-N-methylarginine. A DNA-binding region spans residues 38 to 287; sequence EFQDVIPPDD…FSEKDRPENV (250 aa). Residue lysine 112 forms a Glycyl lysine isopeptide (Lys-Gly) (interchain with G-Cter in SUMO2) linkage. Tyrosine 195 carries the post-translational modification Phosphotyrosine; by JAK2. Lysine 211 is covalently cross-linked (Glycyl lysine isopeptide (Lys-Gly) (interchain with G-Cter in SUMO2)). 294–301 is an ATP binding site; that stretch reads DDMGLGKT. The disordered stretch occupies residues 336–365; the sequence is DDSMKLGGNNTSEKADGLSKDASRCSEQPS. Residues 348-359 are compositionally biased toward basic and acidic residues; that stretch reads EKADGLSKDASR. Serine 397, serine 398, and serine 400 each carry phosphoserine. Positions 435 to 606 constitute a Helicase ATP-binding domain; the sequence is IEDVAFACAL…WSLLSFLKLK (172 aa). A DEGH box motif is present at residues 557–560; that stretch reads DEGH. Residue threonine 736 is modified to Phosphothreonine. The segment at 760 to 801 adopts an RING-type zinc-finger fold; sequence CAICLDSLTVPVITHCAHVFCKPCICQVIQNEQPHAKCPLCR. Positions 837–996 constitute a Helicase C-terminal domain; it reads ALMHALTDLR…TKKPNADEMK (160 aa). The tract at residues 925-1009 is interaction with SP1 and SP3; the sequence is SRVFLMDPAW…INEIRTLIDL (85 aa).

It belongs to the SNF2/RAD54 helicase family. RAD16 subfamily. Interacts with SP1 and SP3 independently of DNA; the interaction with these transcriptional factors may be required for basal transcription of target genes. Interacts with EGR1; the interaction requires prior binding to DNA and represses c-Rel via a DNA looping mechanism. Interacts with GATA4. Interacts with PCNA; the interaction promotes polyubiquitination of PCNA through association with the UBE2B-RAD18 and UBE2V2-UBE2N ubiquitin ligase complexes. Interacts with RAD18, SHPRH, UBE2V2 and UBE2N. In terms of tissue distribution, expressed in brain, heart, kidney, liver, lung, pancreas, placenta and skeletal muscle.

Its subcellular location is the cytoplasm. It localises to the nucleus. The protein resides in the nucleolus. The protein localises to the nucleoplasm. It carries out the reaction S-ubiquitinyl-[E2 ubiquitin-conjugating enzyme]-L-cysteine + [acceptor protein]-L-lysine = [E2 ubiquitin-conjugating enzyme]-L-cysteine + N(6)-ubiquitinyl-[acceptor protein]-L-lysine.. It participates in protein modification; protein ubiquitination. Has both helicase and E3 ubiquitin ligase activities. Possesses intrinsic ATP-dependent nucleosome-remodeling activity; This activity may be required for transcriptional activation or repression of specific target promoters. These may include the SERPINE1 and HIV-1 promoters and the SV40 enhancer, to which this protein can bind directly. Plays a role in error-free postreplication repair (PRR) of damaged DNA and maintains genomic stability through acting as a ubiquitin ligase for 'Lys-63'-linked polyubiquitination of chromatin-bound PCNA. The protein is Helicase-like transcription factor (HLTF) of Homo sapiens (Human).